The primary structure comprises 308 residues: MDTGNKTLPQDFLLLGFPGSQTLQLSLFMLFLVMYILTVSGNVAILMLVSTSHQLHTPMYFFLSNLSFLEIWYTTAAVPKALAILLGRSQTISFTSCLLQMYFVFSLGCTEYFLLAAMAYDRCLAICYPLHYGAIMSSLLSAQLALGSWVCGFVAIAVPTALISGLSFCGPRAINHFFCDIAPWIALACTNTQAVELVAFVIAVVVILSSCLITFVSYVYIISTILRIPSASGRSKAFSTCSSHLTVVLIWYGSTVFLHVRTSIKDALDLIKAVHVLNTVVTPVLNPFIYTLRNKEVRETLLKKWKGK.

Residues 1 to 25 are Extracellular-facing; it reads MDTGNKTLPQDFLLLGFPGSQTLQL. Residue N5 is glycosylated (N-linked (GlcNAc...) asparagine). A helical transmembrane segment spans residues 26 to 46; that stretch reads SLFMLFLVMYILTVSGNVAIL. Residues 47–54 are Cytoplasmic-facing; it reads MLVSTSHQ. Residues 55–75 traverse the membrane as a helical segment; it reads LHTPMYFFLSNLSFLEIWYTT. Over 76–99 the chain is Extracellular; that stretch reads AAVPKALAILLGRSQTISFTSCLL. A disulfide bridge connects residues C97 and C189. The helical transmembrane segment at 100–120 threads the bilayer; that stretch reads QMYFVFSLGCTEYFLLAAMAY. Topologically, residues 121-139 are cytoplasmic; that stretch reads DRCLAICYPLHYGAIMSSL. Residues 140–160 traverse the membrane as a helical segment; sequence LSAQLALGSWVCGFVAIAVPT. Residues 161–197 are Extracellular-facing; the sequence is ALISGLSFCGPRAINHFFCDIAPWIALACTNTQAVEL. Residues 198 to 217 traverse the membrane as a helical segment; that stretch reads VAFVIAVVVILSSCLITFVS. Residues 218 to 237 lie on the Cytoplasmic side of the membrane; sequence YVYIISTILRIPSASGRSKA. A helical membrane pass occupies residues 238–258; that stretch reads FSTCSSHLTVVLIWYGSTVFL. At 259–271 the chain is on the extracellular side; the sequence is HVRTSIKDALDLI. Residues 272–292 traverse the membrane as a helical segment; that stretch reads KAVHVLNTVVTPVLNPFIYTL. Over 293–308 the chain is Cytoplasmic; it reads RNKEVRETLLKKWKGK.

This sequence belongs to the G-protein coupled receptor 1 family.

Its subcellular location is the cell membrane. Functionally, odorant receptor. This Homo sapiens (Human) protein is Olfactory receptor 6F1 (OR6F1).